Consider the following 650-residue polypeptide: MGSSHIPLDPSLNPSPSLIPKLEPVTESTQNLAFQLPNTNPQALISSAVSDFNEATDFSSDYNTVAESARSAFAQRLQRHDDVAVLDSLTGAIVPVEENPEPEPNPYSTSDSSPSVATQRPRPQPRSSELVRITDVGPESERQFREHVRKTRMIYDSLRMFLMMEEAKRNGVGGRRARADGKAGKAGSMMRDCMLWMNRDKRIVGSIPGVQVGDIFFFRFELCVMGLHGHPQSGIDFLTGSLSSNGEPIATSVIVSGGYEDDDDQGDVIMYTGQGGQDRLGRQAEHQRLEGGNLAMERSMYYGIEVRVIRGLKYENEVSSRVYVYDGLFRIVDSWFDVGKSGFGVFKYRLERIEGQAEMGSSVLKFARTLKTNPLSVRPRGYINFDISNGKENVPVYLFNDIDSDQEPLYYEYLAQTSFPPGLFVQQSGNASGCDCVNGCGSGCLCEAKNSGEIAYDYNGTLIRQKPLIHECGSACQCPPSCRNRVTQKGLRNRLEVFRSLETGWGVRSLDVLHAGAFICEYAGVALTREQANILTMNGDTLVYPARFSSARWEDWGDLSQVLADFERPSYPDIPPVDFAMDVSKMRNVACYISHSTDPNVIVQFVLHDHNSLMFPRVMLFAAENIPPMTELSLDYGVVDDWNAKLAICN.

Disordered regions lie at residues 1–24 and 95–129; these read MGSS…KLEP and PVEE…RSSE. Residues 7 to 20 are compositionally biased toward low complexity; that stretch reads PLDPSLNPSPSLIP. Positions 107–118 are enriched in polar residues; it reads YSTSDSSPSVAT. Residues 205–352 form the YDG domain; the sequence is GSIPGVQVGD…FGVFKYRLER (148 aa). A Pre-SET domain is found at 432–490; sequence SGCDCVNGCGSGCLCEAKNSGEIAYDYNGTLIRQKPLIHECGSACQCPPSCRNRVTQKG. Cys434, Cys436, Cys440, Cys444, Cys446, Cys472, Cys476, Cys478, and Cys482 together coordinate Zn(2+). Positions 493–637 constitute an SET domain; the sequence is NRLEVFRSLE…PMTELSLDYG (145 aa).

It belongs to the class V-like SAM-binding methyltransferase superfamily. Histone-lysine methyltransferase family. Suvar3-9 subfamily. In terms of assembly, component of an RNA-directed DNA methylation (RdDM) complex that contains at least MORC6, MORC1/CRT1, MORC2, SWI3D and SUVH9. Interacts directly with MORC6, MORC2 and MORC1/CRT1. Interacts with SWI3B, SWI3C and SWI3D.

Its subcellular location is the nucleus. The protein resides in the chromosome. It localises to the centromere. In terms of biological role, histone methyltransferase family member that plays a role in gene silencing. Together with MORC6 and SUVH2, regulates the silencing of some transposable elements (TEs). According to PubMed:19043555, the protein does not bind S-adenosyl-L-methionine and lacks methyltransferase activity. Instead, it may function downstream of DRM2 in RNA-directed DNA methylation, binding to methylated DNA and recruiting DNA-directed RNA polymerase V to chromatin. The sequence is that of Histone-lysine N-methyltransferase family member SUVH9 (SUVH9) from Arabidopsis thaliana (Mouse-ear cress).